We begin with the raw amino-acid sequence, 114 residues long: Large ribosomal subunit protein uL22 (114 aa).

Belongs to the universal ribosomal protein uL22 family. In terms of assembly, part of the 50S ribosomal subunit.

Its function is as follows. This protein binds specifically to 23S rRNA; its binding is stimulated by other ribosomal proteins, e.g. L4, L17, and L20. It is important during the early stages of 50S assembly. It makes multiple contacts with different domains of the 23S rRNA in the assembled 50S subunit and ribosome. Functionally, the globular domain of the protein is located near the polypeptide exit tunnel on the outside of the subunit, while an extended beta-hairpin is found that lines the wall of the exit tunnel in the center of the 70S ribosome. The chain is Large ribosomal subunit protein uL22 from Mycoplasmopsis agalactiae (strain NCTC 10123 / CIP 59.7 / PG2) (Mycoplasma agalactiae).